Reading from the N-terminus, the 201-residue chain is Probable GTP-binding protein EngB (201 aa).

The EngB-type G domain occupies 25-199; it reads HGIEIAFIGY…KSKLNFWYEK (175 aa). GTP contacts are provided by residues 33–40, 60–64, 78–81, 145–148, and 178–180; these read GYSNSGKS, GRTQL, DLPG, TKCD, and FSS. 2 residues coordinate Mg(2+): serine 40 and threonine 62.

This sequence belongs to the TRAFAC class TrmE-Era-EngA-EngB-Septin-like GTPase superfamily. EngB GTPase family. Mg(2+) is required as a cofactor.

Necessary for normal cell division and for the maintenance of normal septation. The polypeptide is Probable GTP-binding protein EngB (Buchnera aphidicola subsp. Schizaphis graminum (strain Sg)).